The primary structure comprises 549 residues: Elongator complex protein 3 (549 aa).

The region spanning 84 to 374 (RTASGIAVVA…YRVQRDIPMP (291 aa)) is the Radical SAM core domain. Residues C101, C111, and C114 each contribute to the [4Fe-4S] cluster site. Residues K166, 476–479 (ELHV), 499–501 (FGM), and Y532 contribute to the acetyl-CoA site. The N-acetyltransferase domain maps to 398–549 (TECRDVRTRE…EGPYMVKKLD (152 aa)).

The protein belongs to the ELP3 family. In terms of assembly, component of the elongator complex. Interacts with transcriptional repressors snai1 and snai2; interaction with snai1 inhibits its ubiquitination and stabilizes it. [4Fe-4S] cluster is required as a cofactor.

The protein localises to the cytoplasm. It is found in the nucleus. It carries out the reaction uridine(34) in tRNA + acetyl-CoA + S-adenosyl-L-methionine + H2O = 5-(carboxymethyl)uridine(34) in tRNA + 5'-deoxyadenosine + L-methionine + CoA + 2 H(+). The protein operates within tRNA modification; 5-methoxycarbonylmethyl-2-thiouridine-tRNA biosynthesis. Its function is as follows. Catalytic tRNA acetyltransferase subunit of the elongator complex which is required for multiple tRNA modifications, including mcm5U (5-methoxycarbonylmethyl uridine), mcm5s2U (5-methoxycarbonylmethyl-2-thiouridine), and ncm5U (5-carbamoylmethyl uridine). In the elongator complex, acts as a tRNA uridine(34) acetyltransferase by mediating formation of carboxymethyluridine in the wobble base at position 34 in tRNAs. Stabilizes transcriptional repressor snai1 by inhibiting its ubiquitination which promotes neural crest cell migration. The protein is Elongator complex protein 3 of Xenopus tropicalis (Western clawed frog).